The following is a 118-amino-acid chain: Large ribosomal subunit protein bL19 (118 aa).

Belongs to the bacterial ribosomal protein bL19 family.

Functionally, this protein is located at the 30S-50S ribosomal subunit interface and may play a role in the structure and function of the aminoacyl-tRNA binding site. The polypeptide is Large ribosomal subunit protein bL19 (Saccharophagus degradans (strain 2-40 / ATCC 43961 / DSM 17024)).